The chain runs to 457 residues: uncharacterized protein (457 aa).

The N-terminal stretch at 1 to 18 (MKLLISLLWSIFFSIVYS) is a signal peptide. Residues 19 to 173 (EKTLLNFKHY…GGLPASQFPR (155 aa)) are Lumenal-facing. The helical transmembrane segment at 174–194 (MPISGGITIAYSVILALWMFF) threads the bilayer. Over 195–207 (RFQYKHSIVTVQK) the chain is Cytoplasmic. Residues 208–228 (AIMFLLIFSCAQQAVTSIVLD) traverse the membrane as a helical segment. Over 229–243 (TENLRNRGNFTWLGE) the chain is Lumenal. The helical transmembrane segment at 244–264 (TLVSILFACQLVLDLALLLIL) threads the bilayer. The Cytoplasmic segment spans residues 265–284 (SWGYTRYSTNMRDRLFTEAK). A helical transmembrane segment spans residues 285-305 (IPLIICFFALFVVRFFAITIQ). The Lumenal portion of the chain corresponds to 306–314 (SIHLGLWFC). A helical membrane pass occupies residues 315-335 (FFFLTACISALYILFGAFVAL). The Cytoplasmic portion of the chain corresponds to 336–358 (PSTLRALVEQRYYTLHSIYKIFR). A helical transmembrane segment spans residues 359 to 379 (IMVLCGVVTIFSFSLVALIFC). Residues 380 to 457 (SNTNNNSTNK…EEDIRADKSK (78 aa)) lie on the Lumenal side of the membrane.

It belongs to the LU7TM family.

The protein resides in the endoplasmic reticulum membrane. This is an uncharacterized protein from Schizosaccharomyces pombe (strain 972 / ATCC 24843) (Fission yeast).